The primary structure comprises 158 residues: MNRICHIEIDQTSPIPPTAEIEQERQVAIFDLLEENSFALPAREGRAPAEGPFRLTLAIREGRLVFDIRSEEEEKVGEFHLSLGPFRQVVKDYFHICESYFEAVKRLPPSQIEAIDMARRGIHNEGARVLKERLEGKAEVDIDTARRLFTLICVLHWG.

Belongs to the UPF0262 family.

The polypeptide is UPF0262 protein RSKD131_1985 (Cereibacter sphaeroides (strain KD131 / KCTC 12085) (Rhodobacter sphaeroides)).